The primary structure comprises 886 residues: MKIIKSLILLVLFMASPAKGDDFAWMSSGLSGLKSIFGCLEVPTFTSFQEGKIGISLSTAGDWQSTGNAVEKGKLLKIKWSTAGLTPEPRKYLVLYRIDPRFSVPQVFIKTYNYKNSQFEVAGFPGFSTANDGVIPPDKNLDALSFTKMNNYVNYFNYANGNPKIQVNVGDIVNISLADKDDFFNPSTSKTPSTLNNILAKELDSSVFAASALYTESNLGNFENRIVYSSAEQVCNIIDAQRATLCTGTGSATKYTNVSNGALVGKPMAVTTLQNFMSMINSCPANSNLNANPSCYYDQGRGMVIKIGGQVIKNRDQSFVNNDNTQNGFMYYQATSGGAMDFSSDWQPTGMFNNSFSMSDWSRNFSNYTDFATYITNGNWATNFLYFGRYAMIVEIGNGTNTISPGDQKNITLEYLITADGTLPSSSTPGTTVGYDFSGDAPQDGYLWLRVKNPNSNIQGTISVDYANYTGTTWFSNIVYNGAIKPITDQFRTYSEDFYFKLVANSAIQNIAKTALTLYVTIFGLMFVLGALKLTAVEVVTRIFKITIVAILLRPESWSFFNNNFFSAFINGIDFFATNVVGATSSKSNIFGFIDPIFDKYTNGRIWGLLFIQLLQIHNGLAFIVIITIYSLITYFRAVLEVIIGYVIAFIGLTVMISLAPFFIILMLFEKTKTMFNNWISILFSYVVQPTILLIFFLLIDQILSEQLLKVIVRACWDTLIPIKIGLDLSNLGIPLNFSFTLPFLPGIPFFVPQVPDITSSNILTNDTNTFLVLFTTALLFYSYCLMSYGLVSFVTIVVGMLTQVTPARIEGNYQAPSNPTESIMKDIGSVAAPIKKAALAPARIFKDKVIDQNYEARKPQGGGEHTGKFFQNRNDVKPEQTERND.

Residues 1 to 20 (MKIIKSLILLVLFMASPAKG) form the signal peptide. A run of 5 helical transmembrane segments spans residues 520 to 540 (VTIFGLMFVLGALKLTAVEVV), 609 to 629 (LLFIQLLQIHNGLAFIVIITI), 647 to 667 (VIAFIGLTVMISLAPFFIILM), 680 to 700 (ISILFSYVVQPTILLIFFLLI), and 779 to 799 (LLFYSYCLMSYGLVSFVTIVV). The segment at 856–886 (EARKPQGGGEHTGKFFQNRNDVKPEQTERND) is disordered. Over residues 875-886 (NDVKPEQTERND) the composition is skewed to basic and acidic residues.

This sequence belongs to the TrbL/VirB6 family.

It localises to the cell membrane. This is an uncharacterized protein from Rickettsia bellii (strain RML369-C).